The following is a 92-amino-acid chain: UPF0223 protein SMU_1141c (92 aa).

Belongs to the UPF0223 family.

In Streptococcus mutans serotype c (strain ATCC 700610 / UA159), this protein is UPF0223 protein SMU_1141c.